Consider the following 154-residue polypeptide: Large ribosomal subunit protein uL13 (154 aa).

It belongs to the universal ribosomal protein uL13 family. Part of the 50S ribosomal subunit.

This protein is one of the early assembly proteins of the 50S ribosomal subunit, although it is not seen to bind rRNA by itself. It is important during the early stages of 50S assembly. This Rhizobium etli (strain ATCC 51251 / DSM 11541 / JCM 21823 / NBRC 15573 / CFN 42) protein is Large ribosomal subunit protein uL13.